The primary structure comprises 145 residues: Large ribosomal subunit protein uL14m (145 aa).

A mitochondrion-targeting transit peptide spans 1-30 (MAFSSGLWGPCVHMSRAFSQRCFSTTGSLG).

This sequence belongs to the universal ribosomal protein uL14 family. As to quaternary structure, component of the mitochondrial ribosome large subunit (39S) which comprises a 16S rRNA and about 50 distinct proteins. Interacts with MALSU1.

It localises to the mitochondrion. Its function is as follows. May form part of 2 intersubunit bridges in the assembled ribosome. Upon binding to MALSU1, intersubunit bridge formation is blocked, preventing ribosome formation and repressing translation. The polypeptide is Large ribosomal subunit protein uL14m (MRPL14) (Bos taurus (Bovine)).